The sequence spans 611 residues: Dihydroxy-acid dehydratase (611 aa).

Asp-82 lines the Mg(2+) pocket. Cys-123 contacts [2Fe-2S] cluster. Residues Asp-124 and Lys-125 each contribute to the Mg(2+) site. Lys-125 carries the post-translational modification N6-carboxylysine. Cys-192 provides a ligand contact to [2Fe-2S] cluster. Glu-489 contributes to the Mg(2+) binding site. Ser-515 acts as the Proton acceptor in catalysis. The span at Glu-565–Gly-574 shows a compositional bias: basic and acidic residues. The interval Glu-565–Glu-586 is disordered.

The protein belongs to the IlvD/Edd family. As to quaternary structure, homodimer. [2Fe-2S] cluster is required as a cofactor. Mg(2+) serves as cofactor.

The catalysed reaction is (2R)-2,3-dihydroxy-3-methylbutanoate = 3-methyl-2-oxobutanoate + H2O. It catalyses the reaction (2R,3R)-2,3-dihydroxy-3-methylpentanoate = (S)-3-methyl-2-oxopentanoate + H2O. It functions in the pathway amino-acid biosynthesis; L-isoleucine biosynthesis; L-isoleucine from 2-oxobutanoate: step 3/4. It participates in amino-acid biosynthesis; L-valine biosynthesis; L-valine from pyruvate: step 3/4. Its function is as follows. Functions in the biosynthesis of branched-chain amino acids. Catalyzes the dehydration of (2R,3R)-2,3-dihydroxy-3-methylpentanoate (2,3-dihydroxy-3-methylvalerate) into 2-oxo-3-methylpentanoate (2-oxo-3-methylvalerate) and of (2R)-2,3-dihydroxy-3-methylbutanoate (2,3-dihydroxyisovalerate) into 2-oxo-3-methylbutanoate (2-oxoisovalerate), the penultimate precursor to L-isoleucine and L-valine, respectively. This chain is Dihydroxy-acid dehydratase, found in Parabacteroides distasonis (strain ATCC 8503 / DSM 20701 / CIP 104284 / JCM 5825 / NCTC 11152).